Reading from the N-terminus, the 454-residue chain is Chromosomal replication initiator protein DnaA (454 aa).

A domain I, interacts with DnaA modulators region spans residues 1–77 (MASLNENQKF…GFEVFGRMID (77 aa)). Residues 77–115 (DYELYANDELTDIELRRLNNQSPVDEPLSVAKPTSPLVS) form a domain II region. The tract at residues 116-332 (GLNEKYNFEN…GALNRVEFVA (217 aa)) is domain III, AAA+ region. Residues glycine 160, glycine 162, lysine 163, and threonine 164 each contribute to the ATP site. Positions 333–454 (RANGISIVDI…KDIDSIKRKF (122 aa)) are domain IV, binds dsDNA.

It belongs to the DnaA family. In terms of assembly, oligomerizes as a right-handed, spiral filament on DNA at oriC.

The protein resides in the cytoplasm. Functionally, plays an essential role in the initiation and regulation of chromosomal replication. ATP-DnaA binds to the origin of replication (oriC) to initiate formation of the DNA replication initiation complex once per cell cycle. Binds the DnaA box (a 9 base pair repeat at the origin) and separates the double-stranded (ds)DNA. Forms a right-handed helical filament on oriC DNA; dsDNA binds to the exterior of the filament while single-stranded (ss)DNA is stabiized in the filament's interior. The ATP-DnaA-oriC complex binds and stabilizes one strand of the AT-rich DNA unwinding element (DUE), permitting loading of DNA polymerase. After initiation quickly degrades to an ADP-DnaA complex that is not apt for DNA replication. Binds acidic phospholipids. This is Chromosomal replication initiator protein DnaA from Lactococcus lactis subsp. cremoris (strain MG1363).